We begin with the raw amino-acid sequence, 132 residues long: Interleukin-13 (132 aa).

An N-terminal signal peptide occupies residues 1 to 18; that stretch reads MALLLTTVIALTCLGGFA. Asn38, Asn49, Asn57, and Asn72 each carry an N-linked (GlcNAc...) asparagine glycan. 2 disulfide bridges follow: Cys48–Cys76 and Cys64–Cys90.

It belongs to the IL-4/IL-13 family. In terms of assembly, interacts with IL13RA2.

It is found in the secreted. Its function is as follows. Cytokine that plays important roles in allergic inflammation and immune response to parasite infection. Synergizes with IL2 in regulating interferon-gamma synthesis. Stimulates B-cell proliferation, and activation of eosinophils, basophils, and mast cells. Plays an important role in controlling IL33 activity by modulating the production of transmembrane and soluble forms of interleukin-1 receptor-like 1/IL1RL1. Displays the capacity to antagonize Th1-driven proinflammatory immune response and downregulates synthesis of many proinflammatory cytokines including IL1, IL6, IL10, IL12 and TNF-alpha through a mechanism that partially involves suppression of NF-kappa-B. Also functions on nonhematopoietic cells, including endothelial cells where it induces vascular cell adhesion protein 1/VCAM1, which is important in the recruitment of eosinophils. Exerts its biological effects through its receptors which comprises the IL4R chain and the IL13RA1 chain, to activate JAK1 and TYK2, leading to the activation of STAT6. Aside from IL13RA1, another receptor IL13RA2 acts as a high affinity decoy for IL13 and mediates internalization and depletion of extracellular IL13. The protein is Interleukin-13 (IL13) of Macaca mulatta (Rhesus macaque).